The primary structure comprises 281 residues: Cis-2,3-dihydrobiphenyl-2,3-diol dehydrogenase (281 aa).

10–34 (ITGGASGLGRALVDRFVAEGARVAV) contributes to the NAD(+) binding site. Ser142 lines the substrate pocket. Tyr155 functions as the Proton acceptor in the catalytic mechanism.

Belongs to the short-chain dehydrogenases/reductases (SDR) family. In terms of assembly, homotetramer.

The catalysed reaction is (2R,3S)-3-phenylcyclohexa-3,5-diene-1,2-diol + NAD(+) = biphenyl-2,3-diol + NADH + H(+). Its pathway is xenobiotic degradation; biphenyl degradation; 2-hydroxy-2,4-pentadienoate and benzoate from biphenyl: step 2/4. This is Cis-2,3-dihydrobiphenyl-2,3-diol dehydrogenase (bphB) from Comamonas testosteroni (Pseudomonas testosteroni).